The primary structure comprises 606 residues: KH domain-containing protein At4g18375 (606 aa).

Residues 1–10 (MVERKKRKQI) show a composition bias toward basic residues. Residues 1-26 (MVERKKRKQIQRNNSESNRNQKRRIS) are disordered. KH domains follow at residues 35–99 (LVVY…IGFT), 138–210 (NKEC…LFAV), 311–380 (ELVF…VEAV), 394–455 (NVKM…LIQI), and 535–599 (SSAL…ENLV).

Its subcellular location is the nucleus. The polypeptide is KH domain-containing protein At4g18375 (Arabidopsis thaliana (Mouse-ear cress)).